The sequence spans 203 residues: Cardiotrophin-1 (203 aa).

Belongs to the IL-6 superfamily. Expressed in the ventricle and atrium of adult rats. Also detected in the lung, kidney, liver, skeletal muscle, stomach and urinary bladder. Not detected in brain, colon, testis, spleen or thymus. Overexpressed in the ventricles in the case of hypertension and hypertrophy.

It is found in the secreted. Functionally, induces cardiac myocyte hypertrophy in vitro. Binds to and activates the ILST/gp130 receptor. This is Cardiotrophin-1 (Ctf1) from Rattus norvegicus (Rat).